Consider the following 1076-residue polypeptide: Envelopment polyprotein (1076 aa).

The signal sequence occupies residues Met-1–Ala-18. The Lumenal portion of the chain corresponds to Trp-19–Trp-455. 9 cysteine pairs are disulfide-bonded: Cys-28–Cys-51, Cys-145–Cys-158, Cys-182–Cys-329, Cys-208–Cys-218, Cys-260–Cys-307, Cys-289–Cys-294, Cys-351–Cys-354, Cys-358–Cys-426, and Cys-378–Cys-383. Residues Leu-456 to Leu-476 form a helical membrane-spanning segment. The golgi retention signal stretch occupies residues Arg-477–Leu-523. Residues Arg-477–Gly-539 are Cytoplasmic-facing. Residues Gly-544–Gly-566 form an internal signal sequence for glycoprotein C region. Intrachain disulfides connect Cys-567–Cys-608, Cys-580–Cys-590, Cys-633–Cys-729, Cys-648–Cys-845, Cys-654–Cys-702, Cys-660–Cys-709, Cys-664–Cys-691, Cys-695–Cys-700, Cys-782–Cys-797, and Cys-813–Cys-827. Residues Cys-567–Trp-1040 are Lumenal-facing. The segment at Cys-654–Cys-660 is fusion loop. A fusion loop region spans residues Cys-695 to Cys-709. N-linked (GlcNAc...) asparagine; by host glycosylation is found at Asn-857 and Asn-918. Intrachain disulfides connect Cys-912/Cys-982 and Cys-922/Cys-925. A glycan (N-linked (GlcNAc...) asparagine; by host) is linked at Asn-940. A helical membrane pass occupies residues Ile-1041–Ile-1061. At Thr-1062 to Ala-1076 the chain is on the cytoplasmic side.

The protein belongs to the phlebovirus envelope glycoprotein family. In terms of assembly, heterodimer with glycoprotein C. As to quaternary structure, heterodimer with glycoprotein N. Homotrimer (postfusion). Post-translationally, specific enzymatic cleavages in vivo yield mature proteins Glycoprotein C, and Glycoprotein N. In terms of processing, glycosylated. Palmitoylated.

The protein localises to the virion membrane. It localises to the host Golgi apparatus membrane. The protein resides in the host endoplasmic reticulum membrane. Its function is as follows. Structural component of the virion that interacts with glycoprotein C. It shields the hydrophobic fusion loops of the glycoprotein C, preventing premature fusion. The glycoprotein protrusions are arranged on an icosahedral lattice, with T=12 triangulation. They are able to attach the virion to the host cell receptor CD209/DC-SIGN and to promote fusion of membranes with the late endosome after endocytosis of the virion. Plays a role in the packaging of ribonucleoproteins during virus assembly. Structural component of the virion that interacts with glycoprotein N. Acts as a class II fusion protein that is activated upon acidification and subsequent repositioning of the glycoprotein N. The glycoprotein protrusions are arranged on an icosahedral lattice, with T=12 triangulation. They are able to attach the virion to the host cell receptor CD209/DC-SIGN and to promote fusion of membranes with the late endosome after endocytosis of the virion. This Alces americanus (American moose) protein is Envelopment polyprotein (GP).